The sequence spans 419 residues: Gustatory receptor for bitter taste 93a (419 aa).

Topologically, residues 1–55 are cytoplasmic; it reads MFSSSSAMTGKRAESWSRLLLLWLYRCARGLLVLSSSLDRDKLQLKATKQGSRNR. Residues 56–76 traverse the membrane as a helical segment; sequence FLHILWRCIVVMIYAGLWPML. Over 77-90 the chain is Extracellular; it reads TSAVIGKRLESYAD. The helical transmembrane segment at 91 to 111 threads the bilayer; that stretch reads VLALAQSMSVSILAVISFVIQ. The Cytoplasmic segment spans residues 112 to 145; the sequence is ARGENQFREVLNRYLALYQRICLTTRLRHLFPTK. A helical membrane pass occupies residues 146–166; that stretch reads FVVFFLLKLFFTLCGCFHEII. At 167-184 the chain is on the extracellular side; it reads PLFENSHFDDISQMVGTG. Residues 185–205 traverse the membrane as a helical segment; the sequence is FGIYMWLGTLCVLDACFLGFL. Over 206–277 the chain is Cytoplasmic; that stretch reads VSGILYEHMA…NSFRRILQWQ (72 aa). The chain crosses the membrane as a helical span at residues 278–298; the sequence is ILFYIYLNFINICLMLYQYIL. Topologically, residues 299-305 are extracellular; it reads HFLNDDE. Residues 306 to 326 form a helical membrane-spanning segment; it reads VVFVSIVMAFVKLANLVLLMM. Topologically, residues 327–383 are cytoplasmic; sequence CADYTVRQSEVPKKLPLDIVCSDMDERWDKSVETFLGQLQTQRLEIKVLGFFHLNNE. A helical membrane pass occupies residues 384–404; sequence FILLILSAIISYLFILIQFGI. The Extracellular portion of the chain corresponds to 405–419; the sequence is TGGFEASEDIKNRFD.

The protein belongs to the insect chemoreceptor superfamily. Gustatory receptor (GR) family. Gr93a subfamily. In terms of tissue distribution, in larvae, is expressed in neurons of the dorsal pharyngeal sense organs.

It is found in the cell membrane. Functionally, gustatory receptor required for response to the bitter in taste neurons. Gr93a cells respond to bitter compounds such as caffeine. Flies avoid bitter substances, suggesting that Gr93a neuron activity is sufficient to mediate avoidance behavior. This chain is Gustatory receptor for bitter taste 93a (Gr93a), found in Drosophila melanogaster (Fruit fly).